The following is an 89-amino-acid chain: Small ribosomal subunit protein uS15 (89 aa).

It belongs to the universal ribosomal protein uS15 family. As to quaternary structure, part of the 30S ribosomal subunit. Forms a bridge to the 50S subunit in the 70S ribosome, contacting the 23S rRNA.

Functionally, one of the primary rRNA binding proteins, it binds directly to 16S rRNA where it helps nucleate assembly of the platform of the 30S subunit by binding and bridging several RNA helices of the 16S rRNA. Its function is as follows. Forms an intersubunit bridge (bridge B4) with the 23S rRNA of the 50S subunit in the ribosome. This chain is Small ribosomal subunit protein uS15, found in Prosthecochloris aestuarii (strain DSM 271 / SK 413).